A 449-amino-acid polypeptide reads, in one-letter code: Sensor protein QseC (449 aa).

Over 1 to 12 (MKLTQRLSLRVR) the chain is Cytoplasmic. The chain crosses the membrane as a helical span at residues 13–33 (LTLIFLILVSITWAISSFVAW). Topologically, residues 34–161 (RKTTDNVDEL…REDMALAIVA (128 aa)) are periplasmic. The chain crosses the membrane as a helical span at residues 162–182 (AQLTPWLIALPFMLLILLLLL). The HAMP domain maps to 183 to 235 (HRELRPLKKLAQALRFRSPESETPLDAKGVPSEVRPLVEALNQLFSRIHSMMV). At 183–449 (HRELRPLKKL…EGGFEAVVSW (267 aa)) the chain is on the cytoplasmic side. The region spanning 243-449 (DAAHELRSPL…EGGFEAVVSW (207 aa)) is the Histidine kinase domain. Residue His246 is modified to Phosphohistidine; by autocatalysis.

The protein resides in the cell inner membrane. The catalysed reaction is ATP + protein L-histidine = ADP + protein N-phospho-L-histidine.. Its function is as follows. Member of a two-component regulatory system QseB/QseC. Activates the flagella regulon by activating transcription of FlhDC. May activate QseB by phosphorylation. This is Sensor protein QseC (qseC) from Salmonella typhimurium (strain LT2 / SGSC1412 / ATCC 700720).